We begin with the raw amino-acid sequence, 213 residues long: Uridine kinase (213 aa).

13–20 (GGSCSGKT) is an ATP binding site.

It belongs to the uridine kinase family.

Its subcellular location is the cytoplasm. The enzyme catalyses uridine + ATP = UMP + ADP + H(+). It catalyses the reaction cytidine + ATP = CMP + ADP + H(+). Its pathway is pyrimidine metabolism; CTP biosynthesis via salvage pathway; CTP from cytidine: step 1/3. It participates in pyrimidine metabolism; UMP biosynthesis via salvage pathway; UMP from uridine: step 1/1. This Mycoplasma pneumoniae (strain ATCC 29342 / M129 / Subtype 1) (Mycoplasmoides pneumoniae) protein is Uridine kinase (udk).